A 378-amino-acid polypeptide reads, in one-letter code: Putative F-box only protein 15 (378 aa).

An F-box domain is found at 5–52 (KRVYRSLPFELVEEILKKTPAESLNRFKSTCKQWYGIITSKRFMYNHL).

The protein is Putative F-box only protein 15 (FBX15) of Arabidopsis thaliana (Mouse-ear cress).